The primary structure comprises 528 residues: Aurora kinase (528 aa).

2 disordered regions span residues Met1–Gln35 and Ile48–Gln235. Composition is skewed to low complexity over residues Asn18–Asn29 and His59–Asn94. Residues Thr95 to Asn104 show a composition bias toward polar residues. Residues Ser105–Ser120 show a composition bias toward low complexity. The segment covering Gln129–Lys155 has biased composition (polar residues). The span at Thr185–Ser230 shows a compositional bias: low complexity. Residues Phe242 to Ile515 enclose the Protein kinase domain. ATP contacts are provided by residues Leu248–Val256 and Lys271. Residue Asp365 is the Proton acceptor of the active site.

Belongs to the protein kinase superfamily. Ser/Thr protein kinase family. Aurora subfamily.

It is found in the nucleus. Its subcellular location is the cytoplasm. The protein localises to the cytoskeleton. The protein resides in the spindle. It localises to the chromosome. It is found in the centromere. Its subcellular location is the kinetochore. It catalyses the reaction L-seryl-[protein] + ATP = O-phospho-L-seryl-[protein] + ADP + H(+). It carries out the reaction L-threonyl-[protein] + ATP = O-phospho-L-threonyl-[protein] + ADP + H(+). In terms of biological role, component of the chromosomal passenger complex (CPC), a complex that acts as a key regulator of chromosome segregation and cytokinesis. Has a role in error-correction of aberrent kinetochore-microtubule attachments to ensure that sister kinetochores become bioriented and connect to opposite poles by promoting spindle assembly checkpoint signaling. This is Aurora kinase (IPL1) from Candida albicans (strain SC5314 / ATCC MYA-2876) (Yeast).